The primary structure comprises 211 residues: 2,3-bisphosphoglycerate-dependent phosphoglycerate mutase (211 aa).

Residues 9–16 (RHGQSDWN), 22–23 (TG), Arg61, 88–91 (ERDY), Lys99, 115–116 (RR), and 159–160 (GN) contribute to the substrate site. His10 acts as the Tele-phosphohistidine intermediate in catalysis. The Proton donor/acceptor role is filled by Glu88.

Belongs to the phosphoglycerate mutase family. BPG-dependent PGAM subfamily. Homodimer.

The catalysed reaction is (2R)-2-phosphoglycerate = (2R)-3-phosphoglycerate. The protein operates within carbohydrate degradation; glycolysis; pyruvate from D-glyceraldehyde 3-phosphate: step 3/5. In terms of biological role, catalyzes the interconversion of 2-phosphoglycerate and 3-phosphoglycerate. This is 2,3-bisphosphoglycerate-dependent phosphoglycerate mutase from Allorhizobium ampelinum (strain ATCC BAA-846 / DSM 112012 / S4) (Agrobacterium vitis (strain S4)).